We begin with the raw amino-acid sequence, 200 residues long: MYRKYSDGIIEVITGPMYSGKSEELIKRIKILQFANIKTLIVKQKFDTRFSHNEIVSRSGTKLNTIVASNVEEIKKVWNNTYKAIAIDEVQFFDKDIINYIDELASKGIRVIISGLDTDFARKPFGIMPELLAIADDVLKLKAVCFSCKNAGTHTFRITNDKDQKLLGDTESYQARCRKCHLEGEEQKIQMDNLKLNLSL.

Residues 15–22 and 88–91 each bind ATP; these read GPMYSGKS and DEVQ. Glutamate 89 functions as the Proton acceptor in the catalytic mechanism. Zn(2+) contacts are provided by cysteine 145, cysteine 148, cysteine 177, and cysteine 180.

This sequence belongs to the thymidine kinase family. In terms of assembly, homotetramer.

It localises to the cytoplasm. It carries out the reaction thymidine + ATP = dTMP + ADP + H(+). The chain is Thymidine kinase from Mycoplasma mobile (strain ATCC 43663 / 163K / NCTC 11711) (Mesomycoplasma mobile).